A 259-amino-acid chain; its full sequence is 5'-nucleotidase SurE (259 aa).

Residues Asp-8, Asp-9, Ser-39, and Asn-93 each contribute to the a divalent metal cation site.

The protein belongs to the SurE nucleotidase family. It depends on a divalent metal cation as a cofactor.

Its subcellular location is the cytoplasm. It carries out the reaction a ribonucleoside 5'-phosphate + H2O = a ribonucleoside + phosphate. Nucleotidase that shows phosphatase activity on nucleoside 5'-monophosphates. The chain is 5'-nucleotidase SurE from Thermococcus kodakarensis (strain ATCC BAA-918 / JCM 12380 / KOD1) (Pyrococcus kodakaraensis (strain KOD1)).